We begin with the raw amino-acid sequence, 429 residues long: Aspartate--tRNA(Asp/Asn) ligase (429 aa).

L-aspartate is bound at residue Glu167. The tract at residues 189 to 192 (QLYK) is aspartate. Arg210 is an L-aspartate binding site. ATP is bound by residues 210–212 (RAE) and Glu352. Residues Glu352 and Ser355 each coordinate Mg(2+). The L-aspartate site is built by Ser355 and Arg359. An ATP-binding site is contributed by 400–403 (GLAR).

Belongs to the class-II aminoacyl-tRNA synthetase family. Type 2 subfamily. In terms of assembly, homodimer. It depends on Mg(2+) as a cofactor.

The protein resides in the cytoplasm. The enzyme catalyses tRNA(Asx) + L-aspartate + ATP = L-aspartyl-tRNA(Asx) + AMP + diphosphate. In terms of biological role, aspartyl-tRNA synthetase with relaxed tRNA specificity since it is able to aspartylate not only its cognate tRNA(Asp) but also tRNA(Asn). Reaction proceeds in two steps: L-aspartate is first activated by ATP to form Asp-AMP and then transferred to the acceptor end of tRNA(Asp/Asn). The protein is Aspartate--tRNA(Asp/Asn) ligase of Saccharolobus solfataricus (strain ATCC 35092 / DSM 1617 / JCM 11322 / P2) (Sulfolobus solfataricus).